The following is a 1203-amino-acid chain: MIDVNNFEYMKIGLASPDKIRSWSYGEVKKPETINYRTLKPEKDGLFCERIFGPQKDWECHCGKYKRVRYKGVVCDRCGVEVTRAKVRRERMGHIELAAPVSHIWYFKGIPSRMGLVLDMSPRALEEVIYFASYVVTESGDTPLDKKQLLSEKEYRAYRDRYGSTFQAAMGAEAIKKLLQDIDLDKEVDFLKEELKTAQGQRRTRAIKRLEVLEAFRNSGNEPSWMILDVLPVIPPELRPMVQLDGGRFATSDLNDLYRRVINRNNRLKRLLDLGAPSIIVQNEKRMLQEAVDALIDNGRRGRPVTGPGNRPLKSLSHMLKGKQGRFRQNLLGKRVDYSGRSVIVVGPNLKMYQCGLPKEMALELFKPFVMKELVEKGLAHNIKSAKRKIERVQPEVWDVLESVIKEHPVLLNRAPTLHRLGIQAFEPTLVEGRAIRLHPLVCTAYNADFDGDQMAVHVPLSSEAQAEARLLMLAAQNILNPKDGKPVVTPSQDMVLGNYYLTLEREGAIGEGMVFKDANEALLAYQNGYVHLHTRVAVAASAVNNATFTEEQKSMLLLTTVGKLIFNEILPESFPYINEPTNSNLEKETPAKYFVEKGANIKEIIASREEVAPFSKKILGNIIAEVFKRFKITETSRMLDRMKNLGFKYSTKAGITVGVSDILVLGEKDEILHEAQAKVDNVIKQFRRGLITEEERYDRVISIWSNAKDVIQGKLMKSLNKRNPIFMMSDSGARGNASNFTQLAGMRGLMANPSGRIIELPIKSSFREGLTVLEYFISTHGARKGLADTALKTADSGYLTRRLVDVAQDVIVREDDCGTDRGLLIGAIKEGNEVIESLYDRLVGRFARKTVKHPETGEVLVAENQLITEDIAHIVENSGVETVNIRSAFTCNTRHGVCKKCYGRNLATGTDVEVGEAVGIIAAQSIGEPGTQLTMRTFHTGGVAGDDITQGLPRIQEIFEARNPKGQAVISEIDGVIAAINDVKDRQEVVVQGEVETRTYAIPYGARLKVIPGQQISHGKELTEGSIDPKELLKVTDITAVQEYLLREVQKVYRMQGVEIGDKHVEVMVRQMLRKVRVSDAGETDVLPGTLLDIHQFTDANAKVLLQGKQPATARPVLLGITKASLETDSFLSAASFQETTRVLTDAAIKGKRDELLGLKENVIIGKLVPAGTGMNRYRKVDLVKTTQDDMNVENDEVYVEQ.

Zn(2+) contacts are provided by cysteine 60, cysteine 62, cysteine 75, and cysteine 78. Residues aspartate 449, aspartate 451, and aspartate 453 each contribute to the Mg(2+) site. 4 residues coordinate Zn(2+): cysteine 818, cysteine 892, cysteine 899, and cysteine 902.

Belongs to the RNA polymerase beta' chain family. In terms of assembly, the RNAP catalytic core consists of 2 alpha, 1 beta, 1 beta' and 1 omega subunit. When a sigma factor is associated with the core the holoenzyme is formed, which can initiate transcription. The cofactor is Mg(2+). Requires Zn(2+) as cofactor.

The catalysed reaction is RNA(n) + a ribonucleoside 5'-triphosphate = RNA(n+1) + diphosphate. Its function is as follows. DNA-dependent RNA polymerase catalyzes the transcription of DNA into RNA using the four ribonucleoside triphosphates as substrates. The chain is DNA-directed RNA polymerase subunit beta' from Bacillus cereus (strain ATCC 10987 / NRS 248).